Here is a 234-residue protein sequence, read N- to C-terminus: Leucyl/phenylalanyl-tRNA--protein transferase (234 aa).

The protein belongs to the L/F-transferase family.

The protein localises to the cytoplasm. It carries out the reaction N-terminal L-lysyl-[protein] + L-leucyl-tRNA(Leu) = N-terminal L-leucyl-L-lysyl-[protein] + tRNA(Leu) + H(+). The enzyme catalyses N-terminal L-arginyl-[protein] + L-leucyl-tRNA(Leu) = N-terminal L-leucyl-L-arginyl-[protein] + tRNA(Leu) + H(+). The catalysed reaction is L-phenylalanyl-tRNA(Phe) + an N-terminal L-alpha-aminoacyl-[protein] = an N-terminal L-phenylalanyl-L-alpha-aminoacyl-[protein] + tRNA(Phe). In terms of biological role, functions in the N-end rule pathway of protein degradation where it conjugates Leu, Phe and, less efficiently, Met from aminoacyl-tRNAs to the N-termini of proteins containing an N-terminal arginine or lysine. The polypeptide is Leucyl/phenylalanyl-tRNA--protein transferase (Shigella dysenteriae serotype 1 (strain Sd197)).